A 494-amino-acid polypeptide reads, in one-letter code: Chromosomal replication initiator protein DnaA (494 aa).

Residues 1–103 (MTTDPDPPFV…PVSDESDSGS (103 aa)) form a domain I, interacts with DnaA modulators region. The interval 94–117 (PVSDESDSGSVASPAPVAAADPDD) is disordered. Positions 101-113 (SGSVASPAPVAAA) are enriched in low complexity. The tract at residues 104–153 (VASPAPVAAADPDDDVVDDDLAARASAEESWPSYFTNRANRAAEDDATSV) is domain II. Residues 154-370 (NLNRRYTFDT…GALIRVTAFA (217 aa)) form a domain III, AAA+ region region. The ATP site is built by Gly-198, Gly-200, Lys-201, and Thr-202. Positions 371-494 (SLNKTPIDKS…TTRIRQRAKR (124 aa)) are domain IV, binds dsDNA.

The protein belongs to the DnaA family. In terms of assembly, oligomerizes as a right-handed, spiral filament on DNA at oriC.

It is found in the cytoplasm. In terms of biological role, plays an essential role in the initiation and regulation of chromosomal replication. ATP-DnaA binds to the origin of replication (oriC) to initiate formation of the DNA replication initiation complex once per cell cycle. Binds the DnaA box (a 9 base pair repeat at the origin) and separates the double-stranded (ds)DNA. Forms a right-handed helical filament on oriC DNA; dsDNA binds to the exterior of the filament while single-stranded (ss)DNA is stabiized in the filament's interior. The ATP-DnaA-oriC complex binds and stabilizes one strand of the AT-rich DNA unwinding element (DUE), permitting loading of DNA polymerase. After initiation quickly degrades to an ADP-DnaA complex that is not apt for DNA replication. Binds acidic phospholipids. In Mycolicibacterium vanbaalenii (strain DSM 7251 / JCM 13017 / BCRC 16820 / KCTC 9966 / NRRL B-24157 / PYR-1) (Mycobacterium vanbaalenii), this protein is Chromosomal replication initiator protein DnaA.